Here is a 285-residue protein sequence, read N- to C-terminus: 2-dehydro-3-deoxyphosphooctonate aldolase (285 aa).

The protein belongs to the KdsA family.

Its subcellular location is the cytoplasm. It carries out the reaction D-arabinose 5-phosphate + phosphoenolpyruvate + H2O = 3-deoxy-alpha-D-manno-2-octulosonate-8-phosphate + phosphate. Its pathway is carbohydrate biosynthesis; 3-deoxy-D-manno-octulosonate biosynthesis; 3-deoxy-D-manno-octulosonate from D-ribulose 5-phosphate: step 2/3. It functions in the pathway bacterial outer membrane biogenesis; lipopolysaccharide biosynthesis. The chain is 2-dehydro-3-deoxyphosphooctonate aldolase from Verminephrobacter eiseniae (strain EF01-2).